Consider the following 120-residue polypeptide: Small ribosomal subunit protein bS6 (120 aa).

Residues 93-120 form a disordered region; that stretch reads KKADTAPSSMMKTVEREEARKASQTEQA. A compositionally biased stretch (basic and acidic residues) spans 105 to 120; it reads TVEREEARKASQTEQA.

Belongs to the bacterial ribosomal protein bS6 family.

Its function is as follows. Binds together with bS18 to 16S ribosomal RNA. This Delftia acidovorans (strain DSM 14801 / SPH-1) protein is Small ribosomal subunit protein bS6.